The chain runs to 163 residues: ATP synthase subunit b (163 aa).

The chain crosses the membrane as a helical span at residues 10–29 (ALYQLLAFSVLLFFLSKFAL).

Belongs to the ATPase B chain family. As to quaternary structure, F-type ATPases have 2 components, F(1) - the catalytic core - and F(0) - the membrane proton channel. F(1) has five subunits: alpha(3), beta(3), gamma(1), delta(1), epsilon(1). F(0) has three main subunits: a(1), b(2) and c(10-14). The alpha and beta chains form an alternating ring which encloses part of the gamma chain. F(1) is attached to F(0) by a central stalk formed by the gamma and epsilon chains, while a peripheral stalk is formed by the delta and b chains.

It localises to the cell membrane. Functionally, f(1)F(0) ATP synthase produces ATP from ADP in the presence of a proton or sodium gradient. F-type ATPases consist of two structural domains, F(1) containing the extramembraneous catalytic core and F(0) containing the membrane proton channel, linked together by a central stalk and a peripheral stalk. During catalysis, ATP synthesis in the catalytic domain of F(1) is coupled via a rotary mechanism of the central stalk subunits to proton translocation. Component of the F(0) channel, it forms part of the peripheral stalk, linking F(1) to F(0). This chain is ATP synthase subunit b, found in Alkalihalophilus pseudofirmus (strain ATCC BAA-2126 / JCM 17055 / OF4) (Bacillus pseudofirmus).